Reading from the N-terminus, the 480-residue chain is MDSREFRRRGKEMVDYIADYLDGIEGRPVYPDVEPGYLRPLIPATAPQEPETYEDIIKDIEKIIMPGVTHWHSPYFFAYFPTASSYPAMLADMLCGAIGCIGFSWAASPACTELETVMMDWLGKMLELPEAFLAGRAGEGGGVIQGSASEATLVALLAARTKVIRQLQAASPEFTQAAIMEKLVAYTSDQAHSSVERAGLIGGIKLKAVPSDGNFSMRASALREALERDKAAGLIPFFVVATLGTTSCCSFDNLLEVGPICNQEGVWLHIDAAYAGSAFICPEFRYLLNGVEFADSFNFNPHKWLLVNFDCSAMWVKRRTDLTGAFNMDPVYLKHSHQDSGFITDYRHWQIPLGRRFRSLKMWFVFRMYGVKGLQAYIRKHVELSHEFESLVRQDPRFEICTEVILGLVCFRLKGSNELNETLLQRINSAKKIHLVPCRLRDKFVLRFAVCARTVESAHVQLAWEHISDLASSVLRAEKE.

N-acetylmethionine is present on Met-1. 2 repeat units span residues 58–115 and 118–178. The segment at 58–178 is 2 X approximate tandem repeats; the sequence is KDIEKIIMPG…AASPEFTQAA (121 aa). Thr-82 is a substrate binding site. The pyridoxal 5'-phosphate site is built by Ala-148 and Ser-149. Residue His-192 participates in substrate binding. 2 residues coordinate pyridoxal 5'-phosphate: Thr-246 and Asn-300. Lys-303 carries the post-translational modification N6-(pyridoxal phosphate)lysine.

The protein belongs to the group II decarboxylase family. In terms of assembly, homodimer. Pyridoxal 5'-phosphate serves as cofactor.

It catalyses the reaction L-dopa + H(+) = dopamine + CO2. It carries out the reaction 5-hydroxy-L-tryptophan + H(+) = serotonin + CO2. It participates in catecholamine biosynthesis; dopamine biosynthesis; dopamine from L-tyrosine: step 2/2. Its function is as follows. Catalyzes the decarboxylation of L-3,4-dihydroxyphenylalanine (DOPA) to dopamine and L-5-hydroxytryptophan to serotonin. The chain is Aromatic-L-amino-acid decarboxylase (Ddc) from Mus musculus (Mouse).